We begin with the raw amino-acid sequence, 66 residues long: Large ribosomal subunit protein bL33c (66 aa).

Belongs to the bacterial ribosomal protein bL33 family.

It is found in the plastid. Its subcellular location is the chloroplast. In Cucumis sativus (Cucumber), this protein is Large ribosomal subunit protein bL33c.